The sequence spans 199 residues: Insertion sequence IS21-like putative ATP-binding protein (199 aa).

ATP is bound at residue 114 to 121 (GDSGTGKT).

The protein belongs to the IS21/IS1162 putative ATP-binding protein family.

This is Insertion sequence IS21-like putative ATP-binding protein (tnpB) from Bacteroides fragilis (strain YCH46).